The sequence spans 330 residues: Aspartate--ammonia ligase (330 aa).

This sequence belongs to the class-II aminoacyl-tRNA synthetase family. AsnA subfamily.

The protein resides in the cytoplasm. It carries out the reaction L-aspartate + NH4(+) + ATP = L-asparagine + AMP + diphosphate + H(+). The protein operates within amino-acid biosynthesis; L-asparagine biosynthesis; L-asparagine from L-aspartate (ammonia route): step 1/1. The protein is Aspartate--ammonia ligase of Streptococcus agalactiae serotype Ia (strain ATCC 27591 / A909 / CDC SS700).